The following is a 302-amino-acid chain: Eukaryotic translation initiation factor 3 subunit F (302 aa).

An MPN domain is found at 23-165 (IVIEPAVLFS…IKTYVSSPVG (143 aa)). S162 is subject to Phosphoserine.

Belongs to the eIF-3 subunit F family. As to quaternary structure, component of the eukaryotic translation initiation factor 3 (eIF-3) complex. The eIF-3 complex appears to include tif32/eif3a, SPAC25G10.08/eif3b, tif33/eif3c, SPBC4C3.07/eif3f, tif35/eif3g and sum1/eif3i. This set of common subunits may also associate exclusively with either moe1/eif3d and int6/eif3e, or with SPAC821.05/eif3h and SPAC1751.03/eif3m. The eIF-3 complex may also include SPAC3A12.13c/eif3j.

It is found in the cytoplasm. Functionally, component of the eukaryotic translation initiation factor 3 (eIF-3) complex, which is involved in protein synthesis of a specialized repertoire of mRNAs and, together with other initiation factors, stimulates binding of mRNA and methionyl-tRNAi to the 40S ribosome. The eIF-3 complex specifically targets and initiates translation of a subset of mRNAs involved in cell proliferation. The protein is Eukaryotic translation initiation factor 3 subunit F of Schizosaccharomyces pombe (strain 972 / ATCC 24843) (Fission yeast).